Reading from the N-terminus, the 244-residue chain is Mediator of RNA polymerase II transcription subunit 9 (244 aa).

Gly residues predominate over residues 1–10 (MDQFSGGGGN). 2 disordered regions span residues 1–28 (MDQF…TPTN) and 96–131 (QQRL…HTPQ). Over residues 13–28 (MIPNVQAQGNFGTPTN) the composition is skewed to polar residues. Low complexity-rich tracts occupy residues 96–111 (QQRL…QSLQ) and 122–131 (TPQSMMHTPQ). A coiled-coil region spans residues 212 to 239 (KRNVEESEQLLQQRRDLIVEYRKSIEEI).

Belongs to the plant Mediator complex subunit 9 family. In terms of assembly, component of the Mediator complex. Interacts with MEE14/CBP1.

Its subcellular location is the nucleus. In terms of biological role, component of the Mediator complex, a coactivator involved in the regulated transcription of nearly all RNA polymerase II-dependent genes. Mediator functions as a bridge to convey information from gene-specific regulatory proteins to the basal RNA polymerase II transcription machinery. The Mediator complex, having a compact conformation in its free form, is recruited to promoters by direct interactions with regulatory proteins and serves for the assembly of a functional pre-initiation complex with RNA polymerase II and the general transcription factors. The sequence is that of Mediator of RNA polymerase II transcription subunit 9 (MED9) from Arabidopsis thaliana (Mouse-ear cress).